Consider the following 176-residue polypeptide: MKIIAKKDLFINDEIRVREVRLVGLEGEQLGIKPLSEAQAIADAANVDLVLIQPQAVPPVAKIMDYGKFKFEFQKKQKEQRKKQSVVTVKEVRLSPVIDKGDFETKLRNGRKFLEKGNKVKVSIRFKGRMITHKEIGAKVLAEFAEATQDIAIIEQRAKMDGRQMFMQLAPISDKK.

It belongs to the IF-3 family. In terms of assembly, monomer.

Its subcellular location is the cytoplasm. In terms of biological role, IF-3 binds to the 30S ribosomal subunit and shifts the equilibrium between 70S ribosomes and their 50S and 30S subunits in favor of the free subunits, thus enhancing the availability of 30S subunits on which protein synthesis initiation begins. In Streptococcus uberis (strain ATCC BAA-854 / 0140J), this protein is Translation initiation factor IF-3.